We begin with the raw amino-acid sequence, 216 residues long: MKTLIVVDMQNDFISPLGSLTVPKGEELINPISDLMQDADRDWHRIVVTRDWHPSRHISFAKNHKDKEPYSTYTYHSPRPGDDSTQEGILWPVHCVKNTWGSQLVDQIMDQVVTKHIKIVDKGFLTDREYYSAFHDIWNFHKTDMNKYLEKHHTDEVYIVGVALEYCVKATAISAAELGYKTTVLLDYTRPISDDPEVINKVKEELKAHNINVVDK.

Aspartate 8 is a catalytic residue. Aspartate 51, histidine 53, and histidine 94 together coordinate Zn(2+). The active site involves lysine 122. Catalysis depends on cysteine 167, which acts as the Nucleophile.

This sequence belongs to the isochorismatase family.

The protein localises to the cytoplasm. It is found in the nucleus. It localises to the peroxisome. It carries out the reaction nicotinamide + H2O = nicotinate + NH4(+). It participates in cofactor biosynthesis; nicotinate biosynthesis; nicotinate from nicotinamide: step 1/1. Inhibited by N-ethylmaleimide, HgCl(2) and PCMB. Competitively inhibited by NAD, NMN and 3-acetylpyridine. In terms of biological role, catalyzes the deamidation of nicotinamide, an early step in the NAD(+) salvage pathway. Positively regulates SIR2-mediated silencing and longevity by preventing the accumulation of intracellular nicotinamide, an inhibitor of SIR2, during times of stress. Also acts on nicotinyl hydroxamate. This chain is Nicotinamidase (PNC1), found in Saccharomyces cerevisiae (strain ATCC 204508 / S288c) (Baker's yeast).